Reading from the N-terminus, the 415-residue chain is Glutamyl-tRNA reductase (415 aa).

Substrate is bound by residues 49–52 (TCNR), Ser104, 109–111 (EPQ), and Gln115. Catalysis depends on Cys50, which acts as the Nucleophile. Position 184 to 189 (184 to 189 (GAGEMI)) interacts with NADP(+).

Belongs to the glutamyl-tRNA reductase family. Homodimer.

It carries out the reaction (S)-4-amino-5-oxopentanoate + tRNA(Glu) + NADP(+) = L-glutamyl-tRNA(Glu) + NADPH + H(+). The protein operates within porphyrin-containing compound metabolism; protoporphyrin-IX biosynthesis; 5-aminolevulinate from L-glutamyl-tRNA(Glu): step 1/2. Functionally, catalyzes the NADPH-dependent reduction of glutamyl-tRNA(Glu) to glutamate 1-semialdehyde (GSA). In Neisseria meningitidis serogroup B (strain ATCC BAA-335 / MC58), this protein is Glutamyl-tRNA reductase.